Here is a 33-residue protein sequence, read N- to C-terminus: Pardaxin P-1 (33 aa).

Belongs to the pardaxin family. In aqueous solution exists as a tetramer.

The protein resides in the secreted. Its subcellular location is the target cell membrane. Exhibits unusual shark repellent and surfactant properties. Forms voltage-dependent, ion-permeable channels in membranes. At high concentration causes cell membrane lysis. Causes death in killfish oryzias latipes in 30 minutes at a concentration of 25 micrograms/ml. The polypeptide is Pardaxin P-1 (Pardachirus pavoninus (Peacock sole)).